Consider the following 217-residue polypeptide: Probable GTP-binding protein EngB (217 aa).

The EngB-type G domain maps to 27–201 (TGIEVAFAGR…RDKLDTWFSE (175 aa)). GTP is bound by residues 35 to 42 (GRSNAGKS), 62 to 66 (GRTQL), 80 to 83 (DLPG), 147 to 150 (TKAD), and 180 to 182 (FSS). Residues serine 42 and threonine 64 each contribute to the Mg(2+) site.

The protein belongs to the TRAFAC class TrmE-Era-EngA-EngB-Septin-like GTPase superfamily. EngB GTPase family. Requires Mg(2+) as cofactor.

In terms of biological role, necessary for normal cell division and for the maintenance of normal septation. This chain is Probable GTP-binding protein EngB, found in Edwardsiella ictaluri (strain 93-146).